We begin with the raw amino-acid sequence, 691 residues long: Elongation factor G (691 aa).

The tr-type G domain maps to 8–282; that stretch reads ERVRNIGIAA…AVVDYLPAPV (275 aa). Residues 17-24, 81-85, and 135-138 each bind GTP; these read AHIDAGKT, DTPGH, and NKMD.

It belongs to the TRAFAC class translation factor GTPase superfamily. Classic translation factor GTPase family. EF-G/EF-2 subfamily.

It localises to the cytoplasm. In terms of biological role, catalyzes the GTP-dependent ribosomal translocation step during translation elongation. During this step, the ribosome changes from the pre-translocational (PRE) to the post-translocational (POST) state as the newly formed A-site-bound peptidyl-tRNA and P-site-bound deacylated tRNA move to the P and E sites, respectively. Catalyzes the coordinated movement of the two tRNA molecules, the mRNA and conformational changes in the ribosome. The sequence is that of Elongation factor G from Prochlorococcus marinus (strain AS9601).